The following is a 511-amino-acid chain: UDP-N-acetylmuramoyl-L-alanyl-D-glutamate--2,6-diaminopimelate ligase (511 aa).

Ser30 contacts UDP-N-acetyl-alpha-D-muramoyl-L-alanyl-D-glutamate. 110 to 116 contacts ATP; the sequence is GTNGKTT. UDP-N-acetyl-alpha-D-muramoyl-L-alanyl-D-glutamate contacts are provided by residues 152 to 153, Ser179, Gln185, and Arg187; that span reads TT. Lys219 carries the N6-carboxylysine modification. Residues Arg385, 409–412, Gly476, and Glu480 each bind meso-2,6-diaminopimelate; that span reads DNPR. The Meso-diaminopimelate recognition motif signature appears at 409-412; that stretch reads DNPR.

It belongs to the MurCDEF family. MurE subfamily. It depends on Mg(2+) as a cofactor. In terms of processing, carboxylation is probably crucial for Mg(2+) binding and, consequently, for the gamma-phosphate positioning of ATP.

Its subcellular location is the cytoplasm. It catalyses the reaction UDP-N-acetyl-alpha-D-muramoyl-L-alanyl-D-glutamate + meso-2,6-diaminopimelate + ATP = UDP-N-acetyl-alpha-D-muramoyl-L-alanyl-gamma-D-glutamyl-meso-2,6-diaminopimelate + ADP + phosphate + H(+). The protein operates within cell wall biogenesis; peptidoglycan biosynthesis. In terms of biological role, catalyzes the addition of meso-diaminopimelic acid to the nucleotide precursor UDP-N-acetylmuramoyl-L-alanyl-D-glutamate (UMAG) in the biosynthesis of bacterial cell-wall peptidoglycan. The protein is UDP-N-acetylmuramoyl-L-alanyl-D-glutamate--2,6-diaminopimelate ligase of Geobacter metallireducens (strain ATCC 53774 / DSM 7210 / GS-15).